The sequence spans 361 residues: Phosphoserine aminotransferase (361 aa).

Arg-42 contributes to the L-glutamate binding site. Residues 76 to 77, Trp-102, Thr-152, Asp-172, and Gln-195 contribute to the pyridoxal 5'-phosphate site; that span reads AT. Lys-196 is modified (N6-(pyridoxal phosphate)lysine). 237 to 238 serves as a coordination point for pyridoxal 5'-phosphate; that stretch reads NT.

The protein belongs to the class-V pyridoxal-phosphate-dependent aminotransferase family. SerC subfamily. Homodimer. Requires pyridoxal 5'-phosphate as cofactor.

Its subcellular location is the cytoplasm. The catalysed reaction is O-phospho-L-serine + 2-oxoglutarate = 3-phosphooxypyruvate + L-glutamate. It carries out the reaction 4-(phosphooxy)-L-threonine + 2-oxoglutarate = (R)-3-hydroxy-2-oxo-4-phosphooxybutanoate + L-glutamate. It participates in amino-acid biosynthesis; L-serine biosynthesis; L-serine from 3-phospho-D-glycerate: step 2/3. It functions in the pathway cofactor biosynthesis; pyridoxine 5'-phosphate biosynthesis; pyridoxine 5'-phosphate from D-erythrose 4-phosphate: step 3/5. Functionally, catalyzes the reversible conversion of 3-phosphohydroxypyruvate to phosphoserine and of 3-hydroxy-2-oxo-4-phosphonooxybutanoate to phosphohydroxythreonine. In Xanthomonas oryzae pv. oryzae (strain MAFF 311018), this protein is Phosphoserine aminotransferase.